We begin with the raw amino-acid sequence, 752 residues long: ATP-dependent RNA helicase DRS1 (752 aa).

2 disordered regions span residues 1 to 61 (MVVG…NLDE) and 119 to 223 (GLVK…TEGD). Positions 19–34 (DSEDDVPILDSSDDEK) are enriched in acidic residues. The segment covering 40 to 51 (TTKKRKGKNNKK) has biased composition (basic residues). Residues 124–142 (AHIDSKQEEETEKEKVEKE) are compositionally biased toward basic and acidic residues. Acidic residues-rich tracts occupy residues 167 to 191 (NQSE…QEEM) and 200 to 209 (DEIDEEDDSE). Phosphoserine is present on serine 208. Positions 231 to 259 (ENFNSLSLSRPVLKGLASLGYVKPSPIQS) match the Q motif motif. Positions 262-437 (IPIALLGKDI…SLSLKKPVRI (176 aa)) constitute a Helicase ATP-binding domain. 275–282 (AVTGSGKT) is an ATP binding site. The short motif at 385–388 (DEAD) is the DEAD box element. The region spanning 448–639 (KLTQEFVRIR…SMNDTIEDIL (192 aa)) is the Helicase C-terminal domain. The stretch at 621-667 (IEETNKLVESMNDTIEDILVEEKEEKEILRAEMQLRKGENMLKHKKE) forms a coiled coil. Residues 673–752 (RRTWFQSESD…NKKKGFKSRR (80 aa)) are disordered. The segment covering 694-705 (RNKKVTNSKKRK) has biased composition (basic residues). Residues 722 to 734 (TKTDRIADQERTF) are compositionally biased toward basic and acidic residues. Positions 735–752 (KKQKSTNSNKKKGFKSRR) are enriched in basic residues.

It belongs to the DEAD box helicase family. DDX27/DRS1 subfamily. In terms of assembly, interacts with RRP1 and associates with pre-ribosomal particles.

The protein resides in the nucleus. The protein localises to the nucleolus. The enzyme catalyses ATP + H2O = ADP + phosphate + H(+). Functionally, ATP-binding RNA helicase involved in ribosome assembly. This is ATP-dependent RNA helicase DRS1 (DRS1) from Saccharomyces cerevisiae (strain ATCC 204508 / S288c) (Baker's yeast).